The following is a 421-amino-acid chain: MGEQLDPFSASNLPDFISSQKIGRPVNFEGQTNRGHPFSGLKKRGQSSRSWVKIDQDGNSAVLELDKATIMKRCSLPSRDLRLLDPLFIYPSSILGRERAIVVSLEKIRCIITAEEVILMNARDASVVQYQSELCKRLQSNHNLNVKDDLPFEFKALELVLELSCLSLDAQVNELEMEVYPVLDELATNISTLNLEHVRRLKGRLLTLTQKVQKVCDEIEHLMDDDDDMAEMYLTEKKERAEAHASEELEDNIGEDFESSGIVSKSAPVSPVGSTSGNFGKLQRAFSSIVGSHKSLLSSSSIGENIDQLEMLLEAYFVVVDNTLSKLSSLKEYIDDTEDLINIKLGNVQNQLIQFQLLLTAATFVAAIFAAVTAVFGMNLQDSVFQNPTTFQYVLLITGIGCGFLYFGFVLYFKHKKVFPL.

2 helical membrane passes run 357–377 (LLLT…AVFG) and 393–413 (YVLL…VLYF). A Required for magnesium transport activity motif is present at residues 377–379 (GMN).

Belongs to the CorA metal ion transporter (MIT) (TC 1.A.35.5) family. Expressed in the whole plant.

The protein resides in the membrane. In terms of biological role, magnesium transporter that may mediate the influx of magnesium. This Arabidopsis thaliana (Mouse-ear cress) protein is Magnesium transporter MRS2-5 (MRS2-5).